The following is a 317-amino-acid chain: Acetyl-coenzyme A carboxylase carboxyl transferase subunit alpha (317 aa).

The CoA carboxyltransferase C-terminal domain maps to Asn-33–Asp-294.

It belongs to the AccA family. Acetyl-CoA carboxylase is a heterohexamer composed of biotin carboxyl carrier protein (AccB), biotin carboxylase (AccC) and two subunits each of ACCase subunit alpha (AccA) and ACCase subunit beta (AccD).

Its subcellular location is the cytoplasm. The catalysed reaction is N(6)-carboxybiotinyl-L-lysyl-[protein] + acetyl-CoA = N(6)-biotinyl-L-lysyl-[protein] + malonyl-CoA. The protein operates within lipid metabolism; malonyl-CoA biosynthesis; malonyl-CoA from acetyl-CoA: step 1/1. Its function is as follows. Component of the acetyl coenzyme A carboxylase (ACC) complex. First, biotin carboxylase catalyzes the carboxylation of biotin on its carrier protein (BCCP) and then the CO(2) group is transferred by the carboxyltransferase to acetyl-CoA to form malonyl-CoA. This Histophilus somni (strain 2336) (Haemophilus somnus) protein is Acetyl-coenzyme A carboxylase carboxyl transferase subunit alpha.